The sequence spans 339 residues: Tetraacyldisaccharide 4'-kinase (339 aa).

62–69 (VAGGTGKT) contributes to the ATP binding site.

This sequence belongs to the LpxK family.

The enzyme catalyses a lipid A disaccharide + ATP = a lipid IVA + ADP + H(+). It functions in the pathway glycolipid biosynthesis; lipid IV(A) biosynthesis; lipid IV(A) from (3R)-3-hydroxytetradecanoyl-[acyl-carrier-protein] and UDP-N-acetyl-alpha-D-glucosamine: step 6/6. Its function is as follows. Transfers the gamma-phosphate of ATP to the 4'-position of a tetraacyldisaccharide 1-phosphate intermediate (termed DS-1-P) to form tetraacyldisaccharide 1,4'-bis-phosphate (lipid IVA). This chain is Tetraacyldisaccharide 4'-kinase, found in Xylella fastidiosa (strain M12).